Reading from the N-terminus, the 78-residue chain is Exodeoxyribonuclease 7 small subunit (78 aa).

The protein belongs to the XseB family. As to quaternary structure, heterooligomer composed of large and small subunits.

The protein resides in the cytoplasm. It catalyses the reaction Exonucleolytic cleavage in either 5'- to 3'- or 3'- to 5'-direction to yield nucleoside 5'-phosphates.. Functionally, bidirectionally degrades single-stranded DNA into large acid-insoluble oligonucleotides, which are then degraded further into small acid-soluble oligonucleotides. This chain is Exodeoxyribonuclease 7 small subunit, found in Pediococcus pentosaceus (strain ATCC 25745 / CCUG 21536 / LMG 10740 / 183-1w).